The following is a 376-amino-acid chain: MTVSKFVQIRRDLHRIPEIGFKEWKTQQYILDYIGTLSHEFVEVKTWKTGVIVKVNGKNPEKIIGYRADIDGLPITEETGYEFASIHEGMMHACGHDVHTTIGLGLLTKAVSERIDDDLVFLFQPAEEGPGGALPMLESEELKEWKPNIILGLHIAPEYAVGTIATKEGLLFANTSELYIDLKGKGGHAAYPHTANDMIVAASHLVTQLQSVISRNVNPLDSAVITIGKITGGTVQNIIAEKSRLEGTIRTLSVESMKRVKSRIESIVAGIEASFQCEVIIDYGAMYHQVYNHEELTREFMEFVHKQTDMNVITCTEAMTGEDFGYMLREIPGFMFWLGVNSEYGLHHAKLKPDEEVIEKAITFLSQYVKWKGNRK.

Residue Asp69 is part of the active site. The active-site Proton acceptor is Glu128.

The protein belongs to the peptidase M20A family. N-acetyldiaminopimelate deacetylase subfamily.

It catalyses the reaction N-acetyl-(2S,6S)-2,6-diaminopimelate + H2O = (2S,6S)-2,6-diaminopimelate + acetate. It functions in the pathway amino-acid biosynthesis; L-lysine biosynthesis via DAP pathway; LL-2,6-diaminopimelate from (S)-tetrahydrodipicolinate (acetylase route): step 3/3. Functionally, catalyzes the conversion of N-acetyl-diaminopimelate to diaminopimelate and acetate. This chain is N-acetyldiaminopimelate deacetylase, found in Bacillus cereus (strain ATCC 14579 / DSM 31 / CCUG 7414 / JCM 2152 / NBRC 15305 / NCIMB 9373 / NCTC 2599 / NRRL B-3711).